We begin with the raw amino-acid sequence, 295 residues long: ATP synthase gamma chain (295 aa).

Belongs to the ATPase gamma chain family. F-type ATPases have 2 components, CF(1) - the catalytic core - and CF(0) - the membrane proton channel. CF(1) has five subunits: alpha(3), beta(3), gamma(1), delta(1), epsilon(1). CF(0) has three main subunits: a, b and c.

The protein resides in the cell inner membrane. Functionally, produces ATP from ADP in the presence of a proton gradient across the membrane. The gamma chain is believed to be important in regulating ATPase activity and the flow of protons through the CF(0) complex. The polypeptide is ATP synthase gamma chain (Methylorubrum populi (strain ATCC BAA-705 / NCIMB 13946 / BJ001) (Methylobacterium populi)).